Here is a 485-residue protein sequence, read N- to C-terminus: Glycogen synthase (485 aa).

ADP-alpha-D-glucose is bound at residue Lys-18.

This sequence belongs to the glycosyltransferase 1 family. Bacterial/plant glycogen synthase subfamily.

It catalyses the reaction [(1-&gt;4)-alpha-D-glucosyl](n) + ADP-alpha-D-glucose = [(1-&gt;4)-alpha-D-glucosyl](n+1) + ADP + H(+). It participates in glycan biosynthesis; glycogen biosynthesis. Synthesizes alpha-1,4-glucan chains using ADP-glucose. The chain is Glycogen synthase from Dechloromonas aromatica (strain RCB).